A 1070-amino-acid chain; its full sequence is DNA-directed RNA polymerase subunit beta (1070 aa).

This sequence belongs to the RNA polymerase beta chain family. In terms of assembly, in plastids the minimal PEP RNA polymerase catalytic core is composed of four subunits: alpha, beta, beta', and beta''. When a (nuclear-encoded) sigma factor is associated with the core the holoenzyme is formed, which can initiate transcription.

It is found in the plastid. Its subcellular location is the chloroplast. The enzyme catalyses RNA(n) + a ribonucleoside 5'-triphosphate = RNA(n+1) + diphosphate. Its function is as follows. DNA-dependent RNA polymerase catalyzes the transcription of DNA into RNA using the four ribonucleoside triphosphates as substrates. The chain is DNA-directed RNA polymerase subunit beta from Platanus occidentalis (Sycamore).